We begin with the raw amino-acid sequence, 250 residues long: Glycerol-1-phosphate phosphohydrolase 1 (250 aa).

The active-site Nucleophile is the D18. 2 residues coordinate Mg(2+): D18 and D20. The active-site Proton donor is D20. K64 participates in a covalent cross-link: Glycyl lysine isopeptide (Lys-Gly) (interchain with G-Cter in SUMO); alternate. Residue K64 forms a Glycyl lysine isopeptide (Lys-Gly) (interchain with G-Cter in ubiquitin); alternate linkage. Phosphoserine is present on S90. A Glycyl lysine isopeptide (Lys-Gly) (interchain with G-Cter in ubiquitin) cross-link involves residue K144. D179 serves as a coordination point for Mg(2+).

Belongs to the HAD-like hydrolase superfamily. DOG/GPP family. In terms of assembly, monomer. It depends on Mg(2+) as a cofactor.

The protein localises to the cytoplasm. It localises to the nucleus. It carries out the reaction sn-glycerol 1-phosphate + H2O = glycerol + phosphate. The catalysed reaction is sn-glycerol 3-phosphate + H2O = glycerol + phosphate. Major isoform of glycerol-1-phosphate phosphohydrolase involved in glycerol biosynthesis. Plays a role in osmoadaptation and required for adaptation to anaerobic conditions. In Saccharomyces cerevisiae (strain ATCC 204508 / S288c) (Baker's yeast), this protein is Glycerol-1-phosphate phosphohydrolase 1.